The following is a 2035-amino-acid chain: Envoplakin (2035 aa).

Low complexity predominate over residues 1 to 27; the sequence is MFKGLSKGSQGKGSPKGSPAKGSPKGS. Disordered regions lie at residues 1-37 and 63-84; these read MFKG…AATQ and KLQQ…QETG. A globular 1 region spans residues 1-841; the sequence is MFKGLSKGSQ…LEPALAVSAP (841 aa). Positions 12–28 are 4 X 4 AA tandem repeats of K-G-S-P; the sequence is KGSPKGSPAKGSPKGSP. The segment covering 71–84 has biased composition (polar residues); sequence GEQNQALQHQQETG. Residues 229–330 form a Spectrin repeat; sequence YTHLQGCTKQ…LCICQESQLQ (102 aa). Residues 400 to 419 form a disordered region; sequence QEVAPLPQRRNPSKQPLHVD. The SH3 domain maps to 413–470; sequence KQPLHVDSICDWDSGEVQLLRGERYTLKDNADPYTWLVQGPGGETKSAPAACLCIPAP. Positions 842–1664 form a coiled coil; the sequence is KRLRVISLQE…EKERTLRDLH (823 aa). Residues 842–1674 form a central fibrous rod domain region; that stretch reads KRLRVISLQE…TKVSREELNQ (833 aa). A Plectin 1 repeat occupies 1186–1227; the sequence is KQKPKVQLQERVSEIFQVLPETEQEIRRLRAQLQETGSKKSG. The residue at position 1576 (serine 1576) is a Phosphoserine. Basic and acidic residues predominate over residues 1607–1631; it reads KQQKARQLQEEGRLLSQKTESERQK. A disordered region spans residues 1607–1637; sequence KQQKARQLQEEGRLLSQKTESERQKAAQRSQ. The segment at 1675-2035 is globular 2; it reads ETQTRETNLS…SPTLPRSCVR (361 aa). Residues 1679–1714 form a Plectin 2 repeat; sequence RETNLSTKICILEPETGNDMSPYEAYKRGVIDRGQY. A Phosphoserine modification is found at serine 1800. Plectin repeat units follow at residues 1819 to 1856, 1857 to 1894, 1895 to 1932, 1933 to 1970, and 1971 to 2008; these read FGLT…PITG, QKLL…NTST, QRLL…QESV, LPHL…EDLG, and QLLQ…PLSG. Position 2026 is a phosphoserine (serine 2026).

The protein belongs to the plakin or cytolinker family. May form a homodimer or a heterodimer with PPL.

The protein localises to the cell junction. It localises to the desmosome. The protein resides in the cornified envelope. It is found in the cytoplasm. Its subcellular location is the cytoskeleton. In terms of biological role, component of the cornified envelope of keratinocytes. May link the cornified envelope to desmosomes and intermediate filaments. The polypeptide is Envoplakin (Evpl) (Mus musculus (Mouse)).